Here is a 240-residue protein sequence, read N- to C-terminus: Ribonuclease HII (240 aa).

One can recognise an RNase H type-2 domain in the interval 7–215 (RYAIGIDEAG…LKRIAPGWYV (209 aa)). Aspartate 13, glutamate 14, and aspartate 112 together coordinate a divalent metal cation.

Belongs to the RNase HII family. The cofactor is Mn(2+). It depends on Mg(2+) as a cofactor.

It is found in the cytoplasm. The catalysed reaction is Endonucleolytic cleavage to 5'-phosphomonoester.. Endonuclease that specifically degrades the RNA of RNA-DNA hybrids. This Hyperthermus butylicus (strain DSM 5456 / JCM 9403 / PLM1-5) protein is Ribonuclease HII.